Reading from the N-terminus, the 491-residue chain is Chromosomal replication initiator protein DnaA (491 aa).

The interval 1 to 69 (MTTWNKCLKK…TIQEFHDGDL (69 aa)) is domain I, interacts with DnaA modulators. The segment at 69–154 (LLIEYSNKKF…KDDQEYSFGL (86 aa)) is domain II. The segment at 106-126 (DSEETSLNQEPKKSQKKLSSK) is disordered. A domain III, AAA+ region region spans residues 155-371 (PLKEKYVFDS…GALNRVLTTS (217 aa)). ATP-binding residues include Gly199, Gly201, Lys202, and Thr203. The interval 372–491 (KFNHKDPTIE…YELLLDKISR (120 aa)) is domain IV, binds dsDNA.

The protein belongs to the DnaA family. As to quaternary structure, oligomerizes as a right-handed, spiral filament on DNA at oriC.

It localises to the cytoplasm. Plays an essential role in the initiation and regulation of chromosomal replication. ATP-DnaA binds to the origin of replication (oriC) to initiate formation of the DNA replication initiation complex once per cell cycle. Binds the DnaA box (a 9 base pair repeat at the origin) and separates the double-stranded (ds)DNA. Forms a right-handed helical filament on oriC DNA; dsDNA binds to the exterior of the filament while single-stranded (ss)DNA is stabiized in the filament's interior. The ATP-DnaA-oriC complex binds and stabilizes one strand of the AT-rich DNA unwinding element (DUE), permitting loading of DNA polymerase. After initiation quickly degrades to an ADP-DnaA complex that is not apt for DNA replication. Binds acidic phospholipids. In Francisella philomiragia subsp. philomiragia (strain ATCC 25017 / CCUG 19701 / FSC 153 / O#319-036), this protein is Chromosomal replication initiator protein DnaA.